The chain runs to 224 residues: Biosynthetic peptidoglycan transglycosylase (224 aa).

The helical transmembrane segment at Ile-12 to Val-32 threads the bilayer.

The protein belongs to the glycosyltransferase 51 family.

The protein resides in the cell inner membrane. It catalyses the reaction [GlcNAc-(1-&gt;4)-Mur2Ac(oyl-L-Ala-gamma-D-Glu-L-Lys-D-Ala-D-Ala)](n)-di-trans,octa-cis-undecaprenyl diphosphate + beta-D-GlcNAc-(1-&gt;4)-Mur2Ac(oyl-L-Ala-gamma-D-Glu-L-Lys-D-Ala-D-Ala)-di-trans,octa-cis-undecaprenyl diphosphate = [GlcNAc-(1-&gt;4)-Mur2Ac(oyl-L-Ala-gamma-D-Glu-L-Lys-D-Ala-D-Ala)](n+1)-di-trans,octa-cis-undecaprenyl diphosphate + di-trans,octa-cis-undecaprenyl diphosphate + H(+). Its pathway is cell wall biogenesis; peptidoglycan biosynthesis. Its function is as follows. Peptidoglycan polymerase that catalyzes glycan chain elongation from lipid-linked precursors. This is Biosynthetic peptidoglycan transglycosylase from Brucella melitensis biotype 1 (strain ATCC 23456 / CCUG 17765 / NCTC 10094 / 16M).